The primary structure comprises 259 residues: Ubiquinone/menaquinone biosynthesis C-methyltransferase UbiE (259 aa).

Residues threonine 82, aspartate 103, 131-132 (NA), and serine 148 contribute to the S-adenosyl-L-methionine site.

The protein belongs to the class I-like SAM-binding methyltransferase superfamily. MenG/UbiE family.

The catalysed reaction is a 2-demethylmenaquinol + S-adenosyl-L-methionine = a menaquinol + S-adenosyl-L-homocysteine + H(+). It carries out the reaction a 2-methoxy-6-(all-trans-polyprenyl)benzene-1,4-diol + S-adenosyl-L-methionine = a 5-methoxy-2-methyl-3-(all-trans-polyprenyl)benzene-1,4-diol + S-adenosyl-L-homocysteine + H(+). The protein operates within quinol/quinone metabolism; menaquinone biosynthesis; menaquinol from 1,4-dihydroxy-2-naphthoate: step 2/2. It functions in the pathway cofactor biosynthesis; ubiquinone biosynthesis. Methyltransferase required for the conversion of demethylmenaquinol (DMKH2) to menaquinol (MKH2) and the conversion of 2-polyprenyl-6-methoxy-1,4-benzoquinol (DDMQH2) to 2-polyprenyl-3-methyl-6-methoxy-1,4-benzoquinol (DMQH2). The protein is Ubiquinone/menaquinone biosynthesis C-methyltransferase UbiE of Vibrio parahaemolyticus serotype O3:K6 (strain RIMD 2210633).